We begin with the raw amino-acid sequence, 223 residues long: MLEILWIALAYVLGSAPWGLVIARTFCGIDPRESGSRNTGATNVARLCGFGWGVATLLCDVLKGAVPVWLAFRINASPVFVSMVALACVLGHVFSCFMKFRGGKAVATSIGIFLPLAFWQLLASSLLCMLVIWRSGFVSLGSLTLVTALPVALAVSGQWGWLPLSLAVWAVVVWKHRENIVRLRSGTEKSWLKSKNKGAAAGNAAEGDDTQNMNPQDAGRKDG.

The next 5 membrane-spanning stretches (helical) occupy residues Leu2–Ile22, Trp52–Phe72, Pro78–Met98, Ile112–Ile132, and Leu153–Val173. The segment at Trp191–Gly223 is disordered.

The protein belongs to the PlsY family. Probably interacts with PlsX.

It is found in the cell inner membrane. It carries out the reaction an acyl phosphate + sn-glycerol 3-phosphate = a 1-acyl-sn-glycero-3-phosphate + phosphate. Its pathway is lipid metabolism; phospholipid metabolism. In terms of biological role, catalyzes the transfer of an acyl group from acyl-phosphate (acyl-PO(4)) to glycerol-3-phosphate (G3P) to form lysophosphatidic acid (LPA). This enzyme utilizes acyl-phosphate as fatty acyl donor, but not acyl-CoA or acyl-ACP. This chain is Glycerol-3-phosphate acyltransferase, found in Desulfovibrio desulfuricans (strain ATCC 27774 / DSM 6949 / MB).